We begin with the raw amino-acid sequence, 1032 residues long: Kinesin heavy chain isoform 5A (1032 aa).

Ala2 is modified (N-acetylalanine). The Kinesin motor domain maps to 9–327; it reads SIKVLCRFRP…LMFGQRAKTI (319 aa). 86–93 contributes to the ATP binding site; it reads GQTSSGKT. Residues 174–315 are microtubule-binding; that stretch reads VSSPEEILDV…PSSYNDAETK (142 aa). Residues 271-361 are necessary for interaction with ZFYVE27; it reads EGTKSYVPYR…KTKAQKETIA (91 aa). The stretch at 331–906 forms a coiled coil; that stretch reads ASVNLELTAE…VDRIKEAVRY (576 aa). The interaction with BICD2 stretch occupies residues 353-1032; the sequence is TKAQKETIAK…FPLHQETAAS (680 aa). Phosphothreonine is present on Thr397. Disordered stretches follow at residues 906–939 and 978–1010; these read YKSS…YGTR and SGAT…RSDL. A globular region spans residues 907 to 1032; sequence KSSGKRGHSA…FPLHQETAAS (126 aa). Positions 978–989 are enriched in low complexity; sequence SGATSSGGPLAS. Positions 991 to 1003 are enriched in polar residues; the sequence is QKANMDNGNATDI.

It belongs to the TRAFAC class myosin-kinesin ATPase superfamily. Kinesin family. Kinesin subfamily. Oligomer composed of two heavy chains and two light chains. Interacts with GRIP1. Interacts with FMR1 (via C-terminus); this interaction is increased in a mGluR-dependent manner. Interacts with ZFYVE27. Interacts with VAPA, VAPB, SURF4, RAB11A (GDP-bound form), RAB11B (GDP-bound form) and RTN3 in a ZFYVE27-dependent manner. Interacts with BORCS5. Interacts with BICD2. Interacts with DTNB. As to expression, distributed throughout the CNS but is highly enriched in subsets of neurons.

It localises to the cytoplasm. It is found in the perinuclear region. The protein localises to the cytoskeleton. Its subcellular location is the perikaryon. It catalyses the reaction ATP + H2O + a kinesin associated with a microtubule at position (n) = ADP + phosphate a kinesin associated with a microtubule at position (n+1, toward the plus end).. Functionally, microtubule-dependent motor required for slow axonal transport of neurofilament proteins (NFH, NFM and NFL). Can induce formation of neurite-like membrane protrusions in non-neuronal cells in a ZFYVE27-dependent manner. The ZFYVE27-KIF5A complex contributes to the vesicular transport of VAPA, VAPB, SURF4, RAB11A, RAB11B and RTN3 proteins in neurons. Required for anterograde axonal transportation of MAPK8IP3/JIP3 which is essential for MAPK8IP3/JIP3 function in axon elongation. The sequence is that of Kinesin heavy chain isoform 5A from Homo sapiens (Human).